Consider the following 1071-residue polypeptide: SLIT-ROBO Rho GTPase-activating protein 2 (1071 aa).

An F-BAR domain is found at 22-325 (KEIRAQLTEQ…AVENLDATSD (304 aa)). Over residues 181 to 203 (LKEAEKQEEKQIGKSVKQEDRQT) the composition is skewed to basic and acidic residues. Residues 181 to 211 (LKEAEKQEEKQIGKSVKQEDRQTPRSPDSTA) are disordered. The residue at position 206 (Ser-206) is a Phosphoserine. Residues 363–401 (QSELVQRCQQLQSRLSTLKIENEEVKKTMEATLQTIQDI) are a coiled coil. Residues Ser-427, Ser-500, Ser-691, and Ser-695 each carry the phosphoserine modification. The Rho-GAP domain occupies 489–679 (ARRSSTVRKQ…TIIIQHENIF (191 aa)). A disordered region spans residues 700–726 (CDSTHGETTSAEDSTQDVTAEHHTSDD). Polar residues predominate over residues 705 to 717 (GETTSAEDSTQDV). Position 724 is a phosphoserine (Ser-724). The SH3 domain occupies 728-787 (CEPIEAIAKFDYVGRTARELSFKKGASLLLYQRASDDWWEGRHNGIDGLIPHQYIVVQDT). At Ser-795 the chain carries Phosphoserine. 2 disordered regions span residues 795 to 819 (SSPK…TGAS) and 838 to 918 (RKRP…DSPQ). Residues 855–868 (HGLGSSLTDSSSLG) are compositionally biased toward low complexity. Composition is skewed to polar residues over residues 874–885 (RPSSQPIMSQNL) and 897–907 (GHGSLNSISRH). A Phosphoserine modification is found at Ser-916. The residue at position 927 (Arg-927) is a Symmetric dimethylarginine; by PRMT5. Ser-930 is modified (phosphoserine). Residues 940-968 (EVIAQDIEATMNSALNELQELERQSSAKH) adopt a coiled-coil conformation. The interval 984 to 1012 (PVVAPTSEPSSPLHTQLLKDPEPAFQRSA) is disordered. Phosphoserine occurs at positions 990, 994, 1013, and 1027. Positions 1029–1071 (KMAAPVKPPATRPKPTVFPKTNATSPGVNSSASPQATDKSCTV) are disordered. The span at 1047 to 1071 (PKTNATSPGVNSSASPQATDKSCTV) shows a compositional bias: polar residues.

As to quaternary structure, homodimer. Forms a heterooligomer with SRGAP1 and SRGAP3 through its F-BAR domain. Interacts (via SH3 domain) with GPHN. Interacts (via SH3 domain) with FMNL1 (activated by RAC1); regulates the actin filament severing activity of FMNL1 and actin dynamics. Interacts (via SH3 domain) with FMNL3. Interacts with RAC1; specifically stimulates RAC1 GTPase activity. Interacts (via F-BAR domain) with HOMER1. Interacts with ROBO1 and ROBO2. Interacts with FASLG. Interacts with PRMT5. Methylation at Arg-927 is required for the stimulation of cell migration, dimerization and localization at the plasma membrane protrusions.

The protein resides in the cell membrane. It localises to the cell projection. Its subcellular location is the dendritic spine. The protein localises to the postsynaptic density. It is found in the postsynaptic cell membrane. The protein resides in the lamellipodium. It localises to the cytoplasmic vesicle. Its subcellular location is the phagosome. The protein localises to the nucleus. It is found in the cytoplasm. The protein resides in the cytosol. Functionally, postsynaptic RAC1 GTPase activating protein (GAP) that plays a key role in neuronal morphogenesis and migration mainly during development of the cerebral cortex. Regulates excitatory and inhibitory synapse maturation and density in cortical pyramidal neurons. SRGAP2/SRGAP2A limits excitatory and inhibitory synapse density through its RAC1-specific GTPase activating activity, while it promotes maturation of both excitatory and inhibitory synapses through its ability to bind to the postsynaptic scaffolding protein HOMER1 at excitatory synapses, and the postsynaptic protein GPHN at inhibitory synapses. Mechanistically, acts by binding and deforming membranes, thereby regulating actin dynamics to regulate cell migration and differentiation. Promotes cell repulsion and contact inhibition of locomotion: localizes to protrusions with curved edges and controls the duration of RAC1 activity in contact protrusions. In non-neuronal cells, may also play a role in cell migration by regulating the formation of lamellipodia and filopodia. This is SLIT-ROBO Rho GTPase-activating protein 2 from Mus musculus (Mouse).